The following is a 122-amino-acid chain: MAITKQDVLEFISGLSVLELSELVKEFEEKFGVSAQPVAVAGGAVAAVAVEEQTEFNVIITDAGDKKINVIKVVRALTGLGLKEAKDATENVPSTIKEGVDKETAMNAKKELEEAGAKVEVK.

Belongs to the bacterial ribosomal protein bL12 family. Homodimer. Part of the ribosomal stalk of the 50S ribosomal subunit. Forms a multimeric L10(L12)X complex, where L10 forms an elongated spine to which 2 to 4 L12 dimers bind in a sequential fashion. Binds GTP-bound translation factors.

Forms part of the ribosomal stalk which helps the ribosome interact with GTP-bound translation factors. Is thus essential for accurate translation. The protein is Large ribosomal subunit protein bL12 of Sulfurimonas denitrificans (strain ATCC 33889 / DSM 1251) (Thiomicrospira denitrificans (strain ATCC 33889 / DSM 1251)).